The primary structure comprises 84 residues: Alpha-mammal toxin Aah3 (84 aa).

The N-terminal stretch at 1-19 (MNYLVMISLALLLMTGVES) is a signal peptide. Residues 21–82 (RDGYIVDSKN…PIKDPSYKCH (62 aa)) enclose the LCN-type CS-alpha/beta domain. Cystine bridges form between cysteine 31-cysteine 81, cysteine 35-cysteine 53, cysteine 39-cysteine 63, and cysteine 43-cysteine 65. Arginine 84 is a propeptide (removed by a carboxypeptidase).

Belongs to the long (4 C-C) scorpion toxin superfamily. Sodium channel inhibitor family. Alpha subfamily. As to expression, expressed by the venom gland.

The protein resides in the secreted. Functionally, alpha toxins bind voltage-independently at site-3 of sodium channels (Nav) and inhibit the inactivation of the activated channels, thereby blocking neuronal transmission. The polypeptide is Alpha-mammal toxin Aah3 (Androctonus australis (Sahara scorpion)).